We begin with the raw amino-acid sequence, 665 residues long: MTEKEKIRNEVFELQAKINEWDNAYYNLDAPLVEDAIYDREILKLKKLEEQYSSYFSFEELANSPTQKINAKSSDLFKKVTHDSPMLSLNKAYTEEEIQKFIDNIKKVTPTFSFFLEPKIDGLSISIKYRNGQLFQAVTRGDGLVGEDVTENIKQIKNIPKEIAYQKPLEVRGEVYLALSEFEKINLNFQKENKPLMANPRNAAAGTLRQLDKEIVANRNLSAFLYNIVAPEDHNIFTILEARDFLKNLGFSVTKEATYAKDLSEINSYIENFKHLKKTLDYETDGVVIKLNELQHYDALGATNKFPHSAIAFKYEPNTTTTVLKNIFITVGRTGLVTYNAELEPVILSGSCITFATLNNYQYIKDLKLNKGDLVYIKKAGEIIPCVIGLVNKKHEETEFNKFLKCPYCNSDLIETDTLLEQYCSNENCPEIRRKKIIHFASKKAMELNSLGEKNIDVFINEGLLENVIDFYKLKEKKDKIMSLERFGTKSVMNILKSIEESKKNSLDRVIFGLSIKHIGSKVAYFLASKILKLSNFLDFDFDSLISYNEIGEKIISSLKNWVAKEENKNLVKDLLDNDVDLEFIATKKTERFAQLSFVITGTLSQPRSHFEKLIKENGGSISSAVSAKTSYLLVGEDAGSKLAKARALNVKILDEEAFNELLVS.

NAD(+)-binding positions include 35-39 (DAIYD), 88-89 (SL), and Glu-117. Lys-119 (N6-AMP-lysine intermediate) is an active-site residue. The NAD(+) site is built by Arg-140, Glu-174, Lys-290, and Lys-314. Zn(2+) contacts are provided by Cys-406, Cys-409, Cys-424, and Cys-429. In terms of domain architecture, BRCT spans 588–665 (KKTERFAQLS…EEAFNELLVS (78 aa)).

It belongs to the NAD-dependent DNA ligase family. LigA subfamily. Mg(2+) is required as a cofactor. Mn(2+) serves as cofactor.

The catalysed reaction is NAD(+) + (deoxyribonucleotide)n-3'-hydroxyl + 5'-phospho-(deoxyribonucleotide)m = (deoxyribonucleotide)n+m + AMP + beta-nicotinamide D-nucleotide.. DNA ligase that catalyzes the formation of phosphodiester linkages between 5'-phosphoryl and 3'-hydroxyl groups in double-stranded DNA using NAD as a coenzyme and as the energy source for the reaction. It is essential for DNA replication and repair of damaged DNA. The protein is DNA ligase of Metamycoplasma arthritidis (strain 158L3-1) (Mycoplasma arthritidis).